The sequence spans 376 residues: Pregnancy-associated glycoprotein 2 (376 aa).

The first 15 residues, Met1–Cys15, serve as a signal peptide directing secretion. N-linked (GlcNAc...) asparagine glycosylation is found at Asn51 and Asn71. A Peptidase A1 domain is found at Tyr68–Ala373. Residue Asp86 is part of the active site. The cysteines at positions 99 and 104 are disulfide-linked. N-linked (GlcNAc...) asparagine glycosylation is found at Asn114, Asn248, and Asn252. Cysteines 258 and 262 form a disulfide. Residue Asp267 is part of the active site. Cys300 and Cys333 form a disulfide bridge. N-linked (GlcNAc...) asparagine glycosylation is present at Asn343.

Belongs to the peptidase A1 family. N-Glycosylated; the glycans terminate in either N-acetyl-galactosamine (GalNAc) or N-acetyllactosamine. Terminal GalNAc on Asn-linked glycans is greatly reduced prior to parturition while lactosamine-type N-glycans remain unaltered. Trophoblast and placental tissue. Localized to both the mononucleate and binucleate cells of the trophectoderm.

It is found in the secreted. The protein localises to the extracellular space. Its function is as follows. PAG2 or a processed derivative of this molecule might represent a factor that binds the LH receptor. The chain is Pregnancy-associated glycoprotein 2 (PAG2) from Bos taurus (Bovine).